A 137-amino-acid chain; its full sequence is Large ribosomal subunit protein uL16 (137 aa).

This sequence belongs to the universal ribosomal protein uL16 family. In terms of assembly, part of the 50S ribosomal subunit.

Binds 23S rRNA and is also seen to make contacts with the A and possibly P site tRNAs. The chain is Large ribosomal subunit protein uL16 from Halorhodospira halophila (strain DSM 244 / SL1) (Ectothiorhodospira halophila (strain DSM 244 / SL1)).